The chain runs to 382 residues: uncharacterized protein (382 aa).

The next 12 helical transmembrane spans lie at 8-28 (VLLL…LNTL), 41-61 (WQVG…TLIA), 73-93 (SYHY…LSVD), 94-114 (FWSW…IWVI), 133-153 (AAYM…LGVV), 157-177 (LLSV…PLLF), 208-228 (GCII…LYLS), 235-255 (ASVG…QWPI), 274-294 (VVIL…ALFI), 295-315 (LGCA…EKVS), 325-345 (ALLM…SLLM), and 349-369 (SDNL…MMLL).

This sequence belongs to the major facilitator superfamily. YcaD (TC 2.A.1.26) family.

It is found in the cell inner membrane. This is an uncharacterized protein from Yersinia enterocolitica serotype O:8 / biotype 1B (strain NCTC 13174 / 8081).